The primary structure comprises 152 residues: Deoxyuridine 5'-triphosphate nucleotidohydrolase (152 aa).

Substrate contacts are provided by residues 72 to 74 (RSG), asparagine 85, and 89 to 91 (TID).

Belongs to the dUTPase family. Requires Mg(2+) as cofactor.

It carries out the reaction dUTP + H2O = dUMP + diphosphate + H(+). It participates in pyrimidine metabolism; dUMP biosynthesis; dUMP from dCTP (dUTP route): step 2/2. Its function is as follows. This enzyme is involved in nucleotide metabolism: it produces dUMP, the immediate precursor of thymidine nucleotides and it decreases the intracellular concentration of dUTP so that uracil cannot be incorporated into DNA. In Bradyrhizobium sp. (strain ORS 278), this protein is Deoxyuridine 5'-triphosphate nucleotidohydrolase.